Reading from the N-terminus, the 490-residue chain is ATP synthase subunit beta, plastid (490 aa).

An ATP-binding site is contributed by 170-177 (GGAGVGKT).

This sequence belongs to the ATPase alpha/beta chains family. F-type ATPases have 2 components, CF(1) - the catalytic core - and CF(0) - the membrane proton channel. CF(1) has five subunits: alpha(3), beta(3), gamma(1), delta(1), epsilon(1). CF(0) has four main subunits: a(1), b(1), b'(1) and c(9-12).

Its subcellular location is the plastid membrane. The catalysed reaction is ATP + H2O + 4 H(+)(in) = ADP + phosphate + 5 H(+)(out). In terms of biological role, produces ATP from ADP in the presence of a proton gradient across the membrane. The catalytic sites are hosted primarily by the beta subunits. In Cuscuta exaltata (Tall dodder), this protein is ATP synthase subunit beta, plastid.